A 278-amino-acid polypeptide reads, in one-letter code: Tryptophan 2,3-dioxygenase (278 aa).

Substrate contacts are provided by residues 47-51 (FIIQH), Y110, and R114. H236 lines the heme pocket. T250 lines the substrate pocket.

It belongs to the tryptophan 2,3-dioxygenase family. Homotetramer. Heme is required as a cofactor.

It catalyses the reaction L-tryptophan + O2 = N-formyl-L-kynurenine. The protein operates within amino-acid degradation; L-tryptophan degradation via kynurenine pathway; L-kynurenine from L-tryptophan: step 1/2. Its function is as follows. Heme-dependent dioxygenase that catalyzes the oxidative cleavage of the L-tryptophan (L-Trp) pyrrole ring and converts L-tryptophan to N-formyl-L-kynurenine. Catalyzes the oxidative cleavage of the indole moiety. This is Tryptophan 2,3-dioxygenase from Ruegeria pomeroyi (strain ATCC 700808 / DSM 15171 / DSS-3) (Silicibacter pomeroyi).